Reading from the N-terminus, the 104-residue chain is Thioredoxin (104 aa).

The region spanning 2-104 is the Thioredoxin domain; sequence AIVKVTDADF…NLAEVLDKHL (103 aa). Cys29 and Cys32 form a disulfide bridge.

It belongs to the thioredoxin family.

In terms of biological role, component of the thioredoxin-thioredoxin reductase system. Participates in various redox reactions through the reversible oxidation of its active center dithiol to a disulfide and catalyzes dithiol-disulfide exchange reactions. The sequence is that of Thioredoxin (trxA) from Staphylococcus aureus (strain N315).